Reading from the N-terminus, the 958-residue chain is Glycine dehydrogenase (decarboxylating) (958 aa).

An N6-(pyridoxal phosphate)lysine modification is found at K708.

The protein belongs to the GcvP family. In terms of assembly, the glycine cleavage system is composed of four proteins: P, T, L and H. It depends on pyridoxal 5'-phosphate as a cofactor.

The catalysed reaction is N(6)-[(R)-lipoyl]-L-lysyl-[glycine-cleavage complex H protein] + glycine + H(+) = N(6)-[(R)-S(8)-aminomethyldihydrolipoyl]-L-lysyl-[glycine-cleavage complex H protein] + CO2. In terms of biological role, the glycine cleavage system catalyzes the degradation of glycine. The P protein binds the alpha-amino group of glycine through its pyridoxal phosphate cofactor; CO(2) is released and the remaining methylamine moiety is then transferred to the lipoamide cofactor of the H protein. The polypeptide is Glycine dehydrogenase (decarboxylating) (Photorhabdus laumondii subsp. laumondii (strain DSM 15139 / CIP 105565 / TT01) (Photorhabdus luminescens subsp. laumondii)).